Here is a 1209-residue protein sequence, read N- to C-terminus: Protein FAM83H (1209 aa).

A DUF1669 region spans residues Met-1 to Pro-286. The segment at Met-1–Pro-286 is mediates interaction with CSNK1A1 and is required for FAM83H activity in keratin cytoskeleton organization. Phosphoserine is present on residues Ser-512, Ser-513, Ser-515, Ser-522, Ser-639, and Ser-660. Disordered stretches follow at residues Ser-512–Gln-545, Arg-615–Arg-664, and Lys-735–Gln-760. Thr-749 bears the Phosphothreonine mark. Ser-752, Ser-778, Ser-806, and Ser-871 each carry phosphoserine. Residues Ala-829–Ala-1056 form a disordered region. Thr-873 is subject to Phosphothreonine. Ser-882, Ser-893, Ser-904, and Ser-915 each carry phosphoserine. Polar residues predominate over residues Ser-915 to Tyr-942. A Phosphothreonine modification is found at Thr-917. Residue Ser-926 is modified to Phosphoserine. Thr-928 carries the phosphothreonine modification. Phosphoserine occurs at positions 937, 948, 959, 970, 977, 1035, 1041, and 1057. Thr-1072 carries the post-translational modification Phosphothreonine. Disordered stretches follow at residues Leu-1076–Asp-1147 and Glu-1174–Lys-1193. Residues Ser-1080, Ser-1098, and Ser-1177 each carry the phosphoserine modification.

This sequence belongs to the FAM83 family. As to quaternary structure, directly interacts (via DUF1669) with casein kinase isoforms CSNK1A1, CSNK1A1L, CSNK1D and CSNK1E. Interaction with CSNK1A1 recruits CSNK1A1 to keratin filaments. Interacts with KRT18 and probably other keratins. As to expression, expressed in tooth follicle, eye, liver and kidney.

It is found in the cytoplasm. It localises to the cytoskeleton. Functionally, may play a major role in the structural organization and calcification of developing enamel. May play a role in keratin cytoskeleton disassembly by recruiting CSNK1A1 to keratin filaments. Thereby, it may regulate epithelial cell migration. This is Protein FAM83H from Mus musculus (Mouse).